The following is a 281-amino-acid chain: Peptidyl-prolyl cis-trans isomerase CYP28, chloroplastic (281 aa).

Residues 1-24 (MASSSILIPPILTRRNLLLSTTIA) constitute a chloroplast transit peptide. The region spanning 66–268 (STTPCSDSTP…KTVFISGCGE (203 aa)) is the PPIase cyclophilin-type domain.

It belongs to the cyclophilin-type PPIase family. Post-translationally, S-nytrosylated during the hypersensitive disease resistance response. As to expression, ubiquitous. Not detected in roots.

It localises to the plastid. Its subcellular location is the chloroplast. The catalysed reaction is [protein]-peptidylproline (omega=180) = [protein]-peptidylproline (omega=0). Functionally, PPIases accelerate the folding of proteins. It catalyzes the cis-trans isomerization of proline imidic peptide bonds in oligopeptides. This is Peptidyl-prolyl cis-trans isomerase CYP28, chloroplastic (CYP28) from Arabidopsis thaliana (Mouse-ear cress).